The primary structure comprises 361 residues: Ribosomal RNA large subunit methyltransferase M (361 aa).

S-adenosyl-L-methionine is bound by residues Ser187, 220–223, Asp239, Asp259, and Asp276; that span reads CPGG. The active-site Proton acceptor is Lys305.

Belongs to the class I-like SAM-binding methyltransferase superfamily. RNA methyltransferase RlmE family. RlmM subfamily. Monomer.

It is found in the cytoplasm. The enzyme catalyses cytidine(2498) in 23S rRNA + S-adenosyl-L-methionine = 2'-O-methylcytidine(2498) in 23S rRNA + S-adenosyl-L-homocysteine + H(+). In terms of biological role, catalyzes the 2'-O-methylation at nucleotide C2498 in 23S rRNA. The polypeptide is Ribosomal RNA large subunit methyltransferase M (Shewanella sp. (strain W3-18-1)).